Reading from the N-terminus, the 37-residue chain is GVPCKCGSKKGVYWFGQITGCPGGHGYKGSCNYLLGK.

Cys-6 and Cys-31 are oxidised to a cystine.

It localises to the secreted. It is found in the nematocyst. In Bunodosoma cangicum (Sea anemone), this protein is Toxin Bcg III 28.78.